We begin with the raw amino-acid sequence, 1614 residues long: Low-density lipoprotein receptor-related protein 5 (1614 aa).

Positions 1–30 are cleaved as a signal peptide; sequence METAPTRAPPPPPPPLLLLVLYCSLVPAAA. The segment at 31 to 287 is beta-propeller 1; that stretch reads SPLLLFANRR…YSPMDIQVLS (257 aa). The Extracellular portion of the chain corresponds to 31 to 1383; sequence SPLLLFANRR…PPSDDIPAHS (1353 aa). LDL-receptor class B repeat units lie at residues 74–118, 119–161, 162–205, 206–246, and 247–289; these read GAVY…DWVG, KKLY…DPAH, GYMY…DLEE, QKLY…TLSG, and DTLY…LSQE. 2 N-linked (GlcNAc...) asparagine glycosylation sites follow: asparagine 92 and asparagine 137. Residues 294 to 336 form the EGF-like 1 domain; it reads FHTPCEEDNGGCSHLCLLSPREPFYSCACPTGVQLQDNGKTCK. Disulfide bonds link cysteine 298-cysteine 309, cysteine 305-cysteine 320, and cysteine 322-cysteine 335. A beta-propeller 2 region spans residues 340–601; that stretch reads EEVLLLARRT…AVNVAKVVGT (262 aa). 5 LDL-receptor class B repeats span residues 384 to 426, 427 to 469, 470 to 513, 514 to 556, and 557 to 599; these read GYVY…DWVA, RNLY…HPVM, GLMY…DLQE, GKLY…LGDF, and IYWT…AKVV. Residues asparagine 445 and asparagine 498 are each glycosylated (N-linked (GlcNAc...) asparagine). An EGF-like 2 domain is found at 600-640; that stretch reads GTNPCADGNGGCSHLCFFTPRATKCGCPIGLELLSDMKTCI. Disulfide bonds link cysteine 604-cysteine 615, cysteine 611-cysteine 624, and cysteine 626-cysteine 639. Residues 643–902 form a beta-propeller 3 region; the sequence is EAFLVFTSRA…VFHSSRQDGL (260 aa). LDL-receptor class B repeat units follow at residues 686-728, 729-771, 772-814, 815-854, and 855-897; these read NHIY…DWMG, KNLY…DPTK, GYIY…DYAD, QRLYWTDLDTNMIESSNMLGQERMVIADDLPYPFGLTQYS, and DYIY…FHSS. Asparagine 704 carries N-linked (GlcNAc...) asparagine glycosylation. N-linked (GlcNAc...) asparagine glycosylation is present at asparagine 877. In terms of domain architecture, EGF-like 3 spans 901–941; it reads GLNDCVHSNGQCGQLCLAIPGGHRCGCASHYTLDPSSRNCS. 3 cysteine pairs are disulfide-bonded: cysteine 905–cysteine 916, cysteine 912–cysteine 925, and cysteine 927–cysteine 940. Positions 944–1211 are beta-propeller 4; that stretch reads STFLLFSQKF…AVEEVSLEEF (268 aa). LDL-receptor class B repeat units follow at residues 988-1034, 1035-1077, 1078-1122, 1123-1164, and 1165-1206; these read KFIY…DIYS, RTLF…NAER, GYMY…DNAL, GKLF…VLGR, and HLYW…VEEV. The disordered stretch occupies residues 1002–1025; sequence AKDDGTQPSMLTSPSQSLSPDRQP. Residues 1007 to 1021 show a composition bias toward polar residues; it reads TQPSMLTSPSQSLSP. The EGF-like 4 domain maps to 1212 to 1253; it reads SAHPCARDNGGCSHICIAKGDGTPRCSCPVHLVLLQNLLTCG. Disulfide bonds link cysteine 1216–cysteine 1227, cysteine 1223–cysteine 1237, cysteine 1239–cysteine 1252, cysteine 1258–cysteine 1272, cysteine 1265–cysteine 1285, cysteine 1279–cysteine 1294, cysteine 1297–cysteine 1309, cysteine 1304–cysteine 1322, cysteine 1316–cysteine 1331, cysteine 1335–cysteine 1347, cysteine 1342–cysteine 1360, and cysteine 1354–cysteine 1369. 3 LDL-receptor class A domains span residues 1257 to 1295, 1296 to 1332, and 1334 to 1370; these read TCSPDQFACTTGEIDCIPGAWRCDGFPECADQSDEEGCP, VCSASQFPCARGQCVDLRLRCDGEADCQDRSDEANCD, and VCLPNQFRCTSGQCVLIKQQCDSFPDCADGSDELMCE. The helical transmembrane segment at 1384 to 1406 threads the bilayer; that stretch reads SAIGPVIGIILSLFVMGGVYFVC. The Cytoplasmic portion of the chain corresponds to 1407–1614; sequence QRVMCQRYTG…PPPSPCTDSS (208 aa). Positions 1474 to 1498 are disordered; sequence RNHVTGASSSSSSSTKATLYPPILN. The short motif at 1499–1505 is the PPPSP motif A element; it reads PPPSPAT. The short motif at 1537-1544 is the PPPSP motif B element; sequence PPTTPCST. The tract at residues 1567 to 1599 is disordered; sequence SDSDPYPPPPTPHSQYLSAEDSCPPSPGTERSY. A PPPSP motif C motif is present at residues 1573-1580; sequence PPPPTPHS. The PPPSP motif D signature appears at 1590–1595; that stretch reads PPSPGT. The PPPSP motif E motif lies at 1604-1611; it reads PPPPSPCT.

This sequence belongs to the LDLR family. As to quaternary structure, homodimer; disulfide-linked. Forms phosphorylated oligomer aggregates on Wnt-signaling. Component of a WNT-signaling complex that contains a WNT protein, a FZD protein and LRP5 or LRP6. Interacts with FZD8; the interaction is formed on WNT-binding and signaling. Interacts (via the phosphorylated PPPSP motif domains) with AXIN1; the interaction prevents inhibition of beta-catenin phosphorylation and signaling and is enhanced in the presence of GSK3B and WNT1 or WNT3A. Interacts (via beta-propeller regions 3 and 4) with DKK1; the interaction, enhanced by MESD and/or KREMEN, inhibits beta-catenin signaling by preventing GSK3-mediated phosphorylation of the PPPSP motifs and subsequent, AXIN1 binding. Interacts with CSNK1E. Interacts with SOST; the interaction antagonizes canonical Wnt signaling. Interacts with APCDD1. Interacts with MESD; the interaction prevents the formation of LRP5 aggregates, targets LRP5 to the plasma membrane and, when complexed with KREMEN2, increases DKK1 binding. Interacts with CAPRIN2. Phosphorylation of cytoplasmic PPPSP motifs regulates the signal transduction of the Wnt signaling pathway through acting as a docking site for AXIN1. Widely expressed, with the highest expression levels in liver, heart, and lung and the lowest levels in brain and spleen.

It is found in the membrane. The protein resides in the endoplasmic reticulum. In terms of biological role, acts as a coreceptor with members of the frizzled family of seven-transmembrane spanning receptors to transduce signal by Wnt proteins. Activates the canonical Wnt signaling pathway that controls cell fate determination and self-renewal during embryonic development and adult tissue regeneration. In particular, may play an important role in the development of the posterior patterning of the epiblast during gastrulation. During bone development, regulates osteoblast proliferation and differentiation thus determining bone mass. Mechanistically, the formation of the signaling complex between Wnt ligand, frizzled receptor and LRP5 coreceptor promotes the recruitment of AXIN1 to LRP5, stabilizing beta-catenin/CTNNB1 and activating TCF/LEF-mediated transcriptional programs. Acts as a coreceptor for non-Wnt proteins, such as norrin/NDP. Binding of norrin/NDP to frizzled 4/FZD4-LRP5 receptor complex triggers beta-catenin/CTNNB1-dependent signaling known to be required for retinal vascular development. Plays a role in controlling postnatal vascular regression in retina via macrophage-induced endothelial cell apoptosis. This Mus musculus (Mouse) protein is Low-density lipoprotein receptor-related protein 5.